Reading from the N-terminus, the 469-residue chain is Neuraminidase (469 aa).

The Intravirion portion of the chain corresponds to 1-6 (MNTNQR). Residues 7-27 (IITIGTICLIVGIISLLLQIG) traverse the membrane as a helical segment. Residues 11-33 (GTICLIVGIISLLLQIGNIISLW) are involved in apical transport and lipid raft association. The Virion surface portion of the chain corresponds to 28-469 (NIISLWISHS…GADLPFTIDK (442 aa)). Positions 36 to 90 (HSIQTREKNHPEVCNQSVITYENNTWVNQTYVNISNANIVAGQGVTSIILAGNSP) are hypervariable stalk region. N-linked (GlcNAc...) asparagine; by host glycans are attached at residues N50, N58, N63, and N68. The segment at 91-469 (LCPISGWAIY…GADLPFTIDK (379 aa)) is head of neuraminidase. 8 disulfide bridges follow: C92-C417, C124-C129, C184-C231, C233-C238, C279-C292, C281-C290, C318-C335, and C421-C446. A substrate-binding site is contributed by R118. An N-linked (GlcNAc...) asparagine; by host glycan is attached at N146. D151 serves as the catalytic Proton donor/acceptor. Position 152 (R152) interacts with substrate. N-linked (GlcNAc...) asparagine; by host glycosylation occurs at N235. Substrate is bound at residue 277–278 (EE). Position 293 (R293) interacts with substrate. Ca(2+)-binding residues include D294, D324, and N344. R368 provides a ligand contact to substrate. The active-site Nucleophile is the Y402. N-linked (GlcNAc...) asparagine; by host glycosylation occurs at N454.

The protein belongs to the glycosyl hydrolase 34 family. In terms of assembly, homotetramer. Ca(2+) is required as a cofactor. Post-translationally, N-glycosylated.

It is found in the virion membrane. Its subcellular location is the host apical cell membrane. It carries out the reaction Hydrolysis of alpha-(2-&gt;3)-, alpha-(2-&gt;6)-, alpha-(2-&gt;8)- glycosidic linkages of terminal sialic acid residues in oligosaccharides, glycoproteins, glycolipids, colominic acid and synthetic substrates.. With respect to regulation, inhibited by the neuraminidase inhibitors zanamivir (Relenza) and oseltamivir (Tamiflu). These drugs interfere with the release of progeny virus from infected cells and are effective against all influenza strains. Resistance to neuraminidase inhibitors is quite rare. Functionally, catalyzes the removal of terminal sialic acid residues from viral and cellular glycoconjugates. Cleaves off the terminal sialic acids on the glycosylated HA during virus budding to facilitate virus release. Additionally helps virus spread through the circulation by further removing sialic acids from the cell surface. These cleavages prevent self-aggregation and ensure the efficient spread of the progeny virus from cell to cell. Otherwise, infection would be limited to one round of replication. Described as a receptor-destroying enzyme because it cleaves a terminal sialic acid from the cellular receptors. May facilitate viral invasion of the upper airways by cleaving the sialic acid moieties on the mucin of the airway epithelial cells. Likely to plays a role in the budding process through its association with lipid rafts during intracellular transport. May additionally display a raft-association independent effect on budding. Plays a role in the determination of host range restriction on replication and virulence. Sialidase activity in late endosome/lysosome traffic seems to enhance virus replication. The sequence is that of Neuraminidase from Influenza A virus (strain A/Swine/Wisconsin/1/1967 H1N1).